The chain runs to 308 residues: Tetraacyldisaccharide 4'-kinase (308 aa).

63 to 70 (SFGGNGKT) is a binding site for ATP.

Belongs to the LpxK family.

It carries out the reaction a lipid A disaccharide + ATP = a lipid IVA + ADP + H(+). It participates in glycolipid biosynthesis; lipid IV(A) biosynthesis; lipid IV(A) from (3R)-3-hydroxytetradecanoyl-[acyl-carrier-protein] and UDP-N-acetyl-alpha-D-glucosamine: step 6/6. Its function is as follows. Transfers the gamma-phosphate of ATP to the 4'-position of a tetraacyldisaccharide 1-phosphate intermediate (termed DS-1-P) to form tetraacyldisaccharide 1,4'-bis-phosphate (lipid IVA). The protein is Tetraacyldisaccharide 4'-kinase of Campylobacter jejuni subsp. doylei (strain ATCC BAA-1458 / RM4099 / 269.97).